The following is a 31-amino-acid chain: Spectrin beta chain, non-erythrocytic 1 (31 aa).

3 Spectrin repeats span residues 1–10, 11–19, and 20–31; these read VLLLSQDYGK, YKEVAELTR, and TQILAASYELHK. A Phosphotyrosine modification is found at Tyr-27.

Belongs to the spectrin family. In terms of assembly, interacts with ANK2. Interacts with CPNE4 (via VWFA domain). Like erythrocyte spectrin, the spectrin-like proteins are capable to form dimers which can further associate to tetramers. Associates with the gamma-tubulin complex in brain, but not in kidney, liver, sperm, or uterus. Interacts with CAMSAP1. Can form heterodimers with SPTAN1.

Its subcellular location is the cytoplasm. It is found in the cytoskeleton. The protein localises to the myofibril. The protein resides in the sarcomere. It localises to the m line. Its subcellular location is the cytosol. It is found in the cell membrane. Functionally, fodrin, which seems to be involved in secretion, interacts with calmodulin in a calcium-dependent manner and is thus candidate for the calcium-dependent movement of the cytoskeleton at the membrane. Plays a critical role in central nervous system development and function. The polypeptide is Spectrin beta chain, non-erythrocytic 1 (SPTBN1) (Capra hircus (Goat)).